The primary structure comprises 448 residues: Gamete and mating-type specific protein A (448 aa).

Residues 1 to 19 (MKLILVLLCLISTLFVVKG) form the signal peptide. Positions 30-157 (VSYHNKWRSS…PDKSEVSCSY (128 aa)) constitute an SCP domain. Asparagine 55, asparagine 98, and asparagine 119 each carry an N-linked (GlcNAc...) asparagine glycan. A disordered region spans residues 171 to 242 (PKTTTPAPTT…PTTPAPTSTL (72 aa)). Over residues 178 to 236 (PTTPAPTTPKPTTPAPTTPKPTTPAPTTPKPTTPAPTTPKPTTPAPTTPKPTTPAPTTP) the composition is skewed to pro residues. Active-site residues include cysteine 262, histidine 397, and asparagine 415.

The protein belongs to the peptidase C1 family.

It is found in the secreted. Functionally, thiol protease that seems to be involved in the sexual development. This is Gamete and mating-type specific protein A (gmsA) from Dictyostelium discoideum (Social amoeba).